The chain runs to 273 residues: MGVYHADALVIRSREYGESDRLLTLFSREYGKIQAVAKGVRKPKSRQRAGAQLFTYAEYLLHKGKSLDTVNQVSPRESFPHLWTDLDMSMAATAMAELLDLATLPGQPHPELFTLTFSSLFLVESCDPALVQCTYALKLMNYLGYRPRLVECAECGQRVQGERLLFSPDAGGVVCRQCQTQGSSPAVGRWVSGGSLGLMRQLLQGELEKLNRLRWNQWSKKEILEVSQYFCEQTLDKSLRSWSMGNRLVNVGQNPSGKDDLNERRDVDGTGES.

The segment at 250–273 (NVGQNPSGKDDLNERRDVDGTGES) is disordered. Over residues 257–273 (GKDDLNERRDVDGTGES) the composition is skewed to basic and acidic residues.

It belongs to the RecO family.

Functionally, involved in DNA repair and RecF pathway recombination. This is DNA repair protein RecO from Desulfitobacterium hafniense (strain DSM 10664 / DCB-2).